The sequence spans 71 residues: Small ribosomal subunit protein eS17 (71 aa).

The protein belongs to the eukaryotic ribosomal protein eS17 family.

In Pyrobaculum arsenaticum (strain DSM 13514 / JCM 11321 / PZ6), this protein is Small ribosomal subunit protein eS17.